A 405-amino-acid polypeptide reads, in one-letter code: L-rhamnonate dehydratase (405 aa).

Substrate is bound by residues His33 and Arg59. Residues Asp226, Glu252, and Glu280 each contribute to the Mg(2+) site. The Proton acceptor role is filled by His329. Substrate is bound at residue Glu349.

The protein belongs to the mandelate racemase/muconate lactonizing enzyme family. RhamD subfamily. In terms of assembly, homooctamer; tetramer of dimers. Mg(2+) is required as a cofactor.

The catalysed reaction is L-rhamnonate = 2-dehydro-3-deoxy-L-rhamnonate + H2O. Functionally, catalyzes the dehydration of L-rhamnonate to 2-keto-3-deoxy-L-rhamnonate (KDR). In Escherichia coli O81 (strain ED1a), this protein is L-rhamnonate dehydratase.